Here is a 955-residue protein sequence, read N- to C-terminus: Auxin response factor 11 (955 aa).

The segment at residues 143–245 (FCKNLTASDT…QLLLGVRRAT (103 aa)) is a DNA-binding region (TF-B3). The span at 518–543 (ESKLNATSRDPRNTDSYTSRSTSEQN) shows a compositional bias: polar residues. 2 disordered regions span residues 518 to 573 (ESKL…LSSA) and 609 to 646 (TQGN…KSVN). Over residues 551-560 (KTRRSKKGLP) the composition is skewed to basic residues. Positions 852–936 (RTYTKVQKQG…RCIRILSPSE (85 aa)) constitute a PB1 domain.

It belongs to the ARF family. In terms of assembly, homodimers and heterodimers.

It localises to the nucleus. Its function is as follows. Auxin response factors (ARFs) are transcriptional factors that bind specifically to the DNA sequence 5'-TGTCTC-3' found in the auxin-responsive promoter elements (AuxREs). The polypeptide is Auxin response factor 11 (ARF11) (Oryza sativa subsp. indica (Rice)).